A 39-amino-acid polypeptide reads, in one-letter code: Conotoxin ArMSGL-013 (39 aa).

The propeptide occupies 1–5 (RRSLT). Intrachain disulfides connect cysteine 12–cysteine 24, cysteine 16–cysteine 33, and cysteine 23–cysteine 37. At tryptophan 38 the chain carries Tryptophan amide.

Belongs to the conotoxin O3 superfamily. In terms of tissue distribution, expressed by the venom duct.

It is found in the secreted. This is Conotoxin ArMSGL-013 from Conus arenatus (Sand-dusted cone).